The sequence spans 727 residues: Beta-galactosidase 2 (727 aa).

The N-terminal stretch at 1-27 is a signal peptide; it reads MSMHFRNKAWIILAILCFSSLIHSTEA. Glu-185 acts as the Proton donor in catalysis. The active-site Nucleophile is the Glu-254. The N-linked (GlcNAc...) asparagine glycan is linked to Asn-255.

This sequence belongs to the glycosyl hydrolase 35 family. Ubiquitous, with higher expression levels in roots and siliques.

It is found in the secreted. It localises to the extracellular space. The protein resides in the apoplast. It catalyses the reaction Hydrolysis of terminal non-reducing beta-D-galactose residues in beta-D-galactosides.. The protein is Beta-galactosidase 2 (BGAL2) of Arabidopsis thaliana (Mouse-ear cress).